The primary structure comprises 368 residues: Probable magnesium transporter (368 aa).

Residues 1–4 are Extracellular-facing; it reads MEDK. Residues 5–25 form a helical membrane-spanning segment; sequence YIGLALAMSSSLAIGTSFIIT. Over 26 to 50 the chain is Cytoplasmic; it reads KKGLMDASARTGGTDGVQASDYLQN. The chain crosses the membrane as a helical span at residues 51-71; that stretch reads PIWWGGMITMAIGEIANFAAY. At 72 to 76 the chain is on the extracellular side; sequence TFAPA. Residues 77–97 form a helical membrane-spanning segment; it reads ILVTPLGALSVIIGAVLAAIF. Residues 98-101 lie on the Cytoplasmic side of the membrane; that stretch reads LKER. Residues 102-122 form a helical membrane-spanning segment; that stretch reads LGTLGKMGCAICLMGSVIIIL. Residues 123 to 143 lie on the Extracellular side of the membrane; that stretch reads HAPPDKEVQTVDEILGYATQP. A helical membrane pass occupies residues 144-164; the sequence is GFMFYCTVVTLYSLFMIYKIV. Residues 165–175 are Cytoplasmic-facing; the sequence is PKYGNTNPMIY. A helical membrane pass occupies residues 176 to 196; it reads LSICSSVGSISVMSIKAFGIA. The Extracellular segment spans residues 197-206; it reads LKLTLGGNNQ. The helical transmembrane segment at 207-227 threads the bilayer; sequence FTHVSTYLFLIVVALCIVTQM. Residues 228 to 240 are Cytoplasmic-facing; that stretch reads NYFNKALDQFDTS. A helical transmembrane segment spans residues 241-261; that stretch reads IVNPLYYVTFTTFTLAASFIL. The Extracellular portion of the chain corresponds to 262-269; sequence FKGFNTSS. Asparagine 266 is a glycosylation site (N-linked (GlcNAc...) asparagine). Residues 270-290 traverse the membrane as a helical segment; it reads AVDIISLLIGFLIIFSGVYLL. Topologically, residues 291 to 368 are cytoplasmic; it reads NISRSESPMV…GDEDTRNYRH (78 aa).

This sequence belongs to the NIPA family.

The protein resides in the cell membrane. It localises to the early endosome. It catalyses the reaction Mg(2+)(in) = Mg(2+)(out). Probably acts as a selective Mg(2+) transporter. Plays a role in cell wall integrity and in engulfment by host macrophages. In Candida albicans (strain SC5314 / ATCC MYA-2876) (Yeast), this protein is Probable magnesium transporter.